Consider the following 227-residue polypeptide: Cytochrome c oxidase subunit 2 (227 aa).

The Mitochondrial intermembrane segment spans residues 1-14; the sequence is MAYPFQLGLQDATS. A helical membrane pass occupies residues 15–45; sequence PIMEELLHFHDHTLMIVFLISSLVLYIISLM. Over 46–59 the chain is Mitochondrial matrix; the sequence is LTTKLTHTSTMDAQ. A helical membrane pass occupies residues 60–87; sequence EVETVWTILPAIILILIALPSLRILYMM. At 88 to 227 the chain is on the mitochondrial intermembrane side; sequence DEINNPSLTV…YFETWSAVMV (140 aa). Cu cation-binding residues include His-161, Cys-196, Glu-198, Cys-200, His-204, and Met-207. Glu-198 lines the Mg(2+) pocket. Position 218 is a phosphotyrosine (Tyr-218).

This sequence belongs to the cytochrome c oxidase subunit 2 family. In terms of assembly, component of the cytochrome c oxidase (complex IV, CIV), a multisubunit enzyme composed of 14 subunits. The complex is composed of a catalytic core of 3 subunits MT-CO1, MT-CO2 and MT-CO3, encoded in the mitochondrial DNA, and 11 supernumerary subunits COX4I, COX5A, COX5B, COX6A, COX6B, COX6C, COX7A, COX7B, COX7C, COX8 and NDUFA4, which are encoded in the nuclear genome. The complex exists as a monomer or a dimer and forms supercomplexes (SCs) in the inner mitochondrial membrane with NADH-ubiquinone oxidoreductase (complex I, CI) and ubiquinol-cytochrome c oxidoreductase (cytochrome b-c1 complex, complex III, CIII), resulting in different assemblies (supercomplex SCI(1)III(2)IV(1) and megacomplex MCI(2)III(2)IV(2)). Found in a complex with TMEM177, COA6, COX18, COX20, SCO1 and SCO2. Interacts with TMEM177 in a COX20-dependent manner. Interacts with COX20. Interacts with COX16. The cofactor is Cu cation.

The protein resides in the mitochondrion inner membrane. It carries out the reaction 4 Fe(II)-[cytochrome c] + O2 + 8 H(+)(in) = 4 Fe(III)-[cytochrome c] + 2 H2O + 4 H(+)(out). Component of the cytochrome c oxidase, the last enzyme in the mitochondrial electron transport chain which drives oxidative phosphorylation. The respiratory chain contains 3 multisubunit complexes succinate dehydrogenase (complex II, CII), ubiquinol-cytochrome c oxidoreductase (cytochrome b-c1 complex, complex III, CIII) and cytochrome c oxidase (complex IV, CIV), that cooperate to transfer electrons derived from NADH and succinate to molecular oxygen, creating an electrochemical gradient over the inner membrane that drives transmembrane transport and the ATP synthase. Cytochrome c oxidase is the component of the respiratory chain that catalyzes the reduction of oxygen to water. Electrons originating from reduced cytochrome c in the intermembrane space (IMS) are transferred via the dinuclear copper A center (CU(A)) of subunit 2 and heme A of subunit 1 to the active site in subunit 1, a binuclear center (BNC) formed by heme A3 and copper B (CU(B)). The BNC reduces molecular oxygen to 2 water molecules using 4 electrons from cytochrome c in the IMS and 4 protons from the mitochondrial matrix. This is Cytochrome c oxidase subunit 2 (MT-CO2) from Lycalopex vetulus (Hoary fox).